A 384-amino-acid polypeptide reads, in one-letter code: Bacterial ceramide synthase (384 aa).

The protein resides in the cytoplasm. The enzyme catalyses 3-oxosphinganine + a fatty acyl-CoA = N-acyl-3-oxosphinganine + CoA + H(+). It carries out the reaction 3-oxosphinganine + tetradecanoyl-CoA = N-tetradecanoyl-3-oxosphinganine + CoA + H(+). The catalysed reaction is 3-oxosphinganine + hexadecanoyl-CoA = N-hexadecanoyl-3-oxosphinganine + CoA + H(+). It catalyses the reaction 3-oxosphinganine + (9Z)-hexadecenoyl-CoA = N-(9Z-hexadecenoyl)-3-oxosphinganine + CoA + H(+). The enzyme catalyses 3-oxosphinganine + octanoyl-CoA = N-octanoyl-3-oxosphinganine + CoA + H(+). It carries out the reaction 3-oxosphinganine + decanoyl-CoA = N-decanoyl-3-oxosphinganine + CoA + H(+). The catalysed reaction is 3-oxosphinganine + dodecanoyl-CoA = N-dodecanoyl-3-oxosphinganine + CoA + H(+). It catalyses the reaction 3-oxosphinganine + octadecanoyl-CoA = N-octadecanoyl-3-oxosphinganine + CoA + H(+). The enzyme catalyses 3-oxosphinganine + eicosanoyl-CoA = N-eicosanoyl-3-oxosphinganine + CoA + H(+). It carries out the reaction 3-oxosphinganine + docosanoyl-CoA = N-docosanoyl-3-ketodihydrosphingosine + CoA + H(+). The catalysed reaction is 3-oxosphinganine + tetracosanoyl-CoA = N-tetracosanoyl-3-oxosphinganine + CoA + H(+). It functions in the pathway lipid metabolism; sphingolipid metabolism. Functionally, involved in de novo bacterial ceramide synthesis. Catalyzes the condensation of 3-oxosphinganine with an acyl-CoA to generate oxidized ceramides. Can use acyl-CoA substrates ranging from C8 to C24, with highest in vitro activity with C14 and very little activity with acyl-CoA thioesters of 18 carbons or longer. May have a preference for monounsaturated acyl-CoA substrates, as it has a threefold greater preference for C16:1-CoA over C16:0-CoA as a substrate in vitro. The chain is Bacterial ceramide synthase from Caulobacter vibrioides (strain NA1000 / CB15N) (Caulobacter crescentus).